A 671-amino-acid chain; its full sequence is DNA ligase (671 aa).

NAD(+)-binding positions include 32–36, 81–82, and E113; these read DVEYD and SL. The active-site N6-AMP-lysine intermediate is the K115. Residues R136, E173, K290, and K314 each contribute to the NAD(+) site. Zn(2+) is bound by residues C408, C411, C426, and C432. The BRCT domain maps to 593 to 671; the sequence is EIDSPFAGKT…EAEMLRLLGS (79 aa).

The protein belongs to the NAD-dependent DNA ligase family. LigA subfamily. It depends on Mg(2+) as a cofactor. Mn(2+) is required as a cofactor.

The catalysed reaction is NAD(+) + (deoxyribonucleotide)n-3'-hydroxyl + 5'-phospho-(deoxyribonucleotide)m = (deoxyribonucleotide)n+m + AMP + beta-nicotinamide D-nucleotide.. Its function is as follows. DNA ligase that catalyzes the formation of phosphodiester linkages between 5'-phosphoryl and 3'-hydroxyl groups in double-stranded DNA using NAD as a coenzyme and as the energy source for the reaction. It is essential for DNA replication and repair of damaged DNA. This Escherichia coli O17:K52:H18 (strain UMN026 / ExPEC) protein is DNA ligase.